The following is a 290-amino-acid chain: Eukaryotic translation initiation factor 3 subunit F-2 (290 aa).

Residues 12–150 (VRLQPLVLFQ…TRLYCGVTMG (139 aa)) enclose the MPN domain.

This sequence belongs to the eIF-3 subunit F family. As to quaternary structure, component of the eukaryotic translation initiation factor 3 (eIF-3) complex. The eIF-3 complex interacts with pix.

It is found in the cytoplasm. Functionally, component of the eukaryotic translation initiation factor 3 (eIF-3) complex, which is involved in protein synthesis of a specialized repertoire of mRNAs and, together with other initiation factors, stimulates binding of mRNA and methionyl-tRNAi to the 40S ribosome. The eIF-3 complex specifically targets and initiates translation of a subset of mRNAs involved in cell proliferation. The sequence is that of Eukaryotic translation initiation factor 3 subunit F-2 from Drosophila virilis (Fruit fly).